An 847-amino-acid polypeptide reads, in one-letter code: MAAAAPAAAALTEAPAVPGTAEPETGDEDSREVRVLQSLRGRIYEAKNLLPYLGPNKMRDCFCTINLDQEEVYRTQVVEKSLSPYFSEEFYFEIPRTFQYLSFYVYDKNVLQRDLRIGKVAIKKEDLCSHSGKETWFSLQPIDSNSEVQGKVHLELKLNELITENGTVCQQLVVHIKACHGLPLINGQSCDPYATVSLVGPSRNDQKKTKVKKKTSNPQFNEVFYFEVTRSSSYTRKSQFQVEEEDIEKLEIRIDLWNNENLVQDVFLGEIKVPVNVLRNDSSHQAWYLLQPRDNGNKSSKPDDLGSLLLTLCYTEDYVLPSEYYGPLKALLLKSPDVQPVSASAAYILGEICRDQKDAVLPLVRLLLHHNKLVPFITAVADLDLKDTQDANAIFRGNSLATQCLTEMMKIVGGHYLKVTLKPVLDEICESSKSCEIDPVKLKEGDNVESNKENLYYYVDKVFSAIVGSSVSCPTVMCDIFYSLRQMAAKRFPNNPHVQYSAVSSFVFLRFFAVAILSPHAFHLRPHYPDTQTVRTLTLISKTIQIIGNWGCQSRRKSRFKKSVMCEFLKMFQEERYFTDVKKFLDEISSTETKESSGTSEPVHLKEGEMYKRAQGRTRIGKKNFKKRWFCLTSKELTYHKQQGKDAIYTIPVKNILAVEKLEESSFNKKNMFQVIHTEKTLYIQANNCVEANEWIDMLCRVSRCNHNRLSSFHPSAYLNGNWLCCQETSEGTPGCKPCTAGIPADIQIDIDEDRETERIYSVFTLSLLKLQKMEEACGSIAVYQGPQKEPGYSKFTIEDSVATFKTIQQIKSTIEKLDEPHEKYRKKRSSSAKYGSKENPIVGKIS.

Positions 1 to 18 (MAAAAPAAAALTEAPAVP) are enriched in low complexity. The segment at 1 to 31 (MAAAAPAAAALTEAPAVPGTAEPETGDEDSR) is disordered. The residue at position 2 (Ala2) is an N-acetylalanine. C2 domains are found at residues 19-137 (GTAE…ETWF) and 148-288 (VQGK…QAWY). Residues 371–588 (NKLVPFITAV…TDVKKFLDEI (218 aa)) enclose the Ras-GAP domain. Ser554 carries the post-translational modification Phosphoserine. The 102-residue stretch at 603–704 (VHLKEGEMYK…WIDMLCRVSR (102 aa)) folds into the PH domain. A Btk-type zinc finger spans residues 706 to 742 (NHNRLSSFHPSAYLNGNWLCCQETSEGTPGCKPCTAG). Positions 714, 725, 726, and 736 each coordinate Zn(2+). Residues 819–847 (DEPHEKYRKKRSSSAKYGSKENPIVGKIS) are disordered.

In terms of tissue distribution, widely expressed. Higher expression in brain, placenta, and kidney.

The protein resides in the cell membrane. In terms of biological role, inhibitory regulator of the Ras-cyclic AMP pathway. May bind inositol tetrakisphosphate (IP4) and phospholipids. In Rattus norvegicus (Rat), this protein is Ras GTPase-activating protein 2 (Rasa2).